Here is a 604-residue protein sequence, read N- to C-terminus: ATP-dependent RNA helicase DBP1 (604 aa).

Residues 1–79 form a disordered region; that stretch reads MSDGSGRYVP…RASGSGGFGG (79 aa). Polar residues predominate over residues 32 to 45; sequence SRYSGNGFFSSPNR. The Q motif signature appears at 138 to 166; the sequence is TEFKSPPLDELLLENVELANFSKPTPVQK. The Helicase ATP-binding domain maps to 169 to 358; the sequence is IPIVTKNRDL…RDFLKDYIFL (190 aa). 182 to 189 is a binding site for ATP; it reads AQTGSGKT. The DEAD box signature appears at 302–305; it reads DEAD. One can recognise a Helicase C-terminal domain in the interval 386–529; it reads LLDILINEID…EVPQFLVNMV (144 aa). The interval 535–591 is disordered; the sequence is FGRGGRNSRTGSNRGRGSNTRDYRHSNKDDWGSLGSSRRGFRSNDNRGFGNNWGSSS. Over residues 541–552 the composition is skewed to low complexity; the sequence is NSRTGSNRGRGS. Over residues 553–565 the composition is skewed to basic and acidic residues; sequence NTRDYRHSNKDDW.

This sequence belongs to the DEAD box helicase family. DDX3/DED1 subfamily.

The protein resides in the cytoplasm. The enzyme catalyses ATP + H2O = ADP + phosphate + H(+). ATP-binding RNA helicase involved in translation initiation. Remodels RNA in response to ADP and ATP concentrations by facilitating disruption, but also formation of RNA duplexes. Redundant to DED1, may be required in conditions in which DED1 expression is decreased. The chain is ATP-dependent RNA helicase DBP1 (DBP1) from Candida glabrata (strain ATCC 2001 / BCRC 20586 / JCM 3761 / NBRC 0622 / NRRL Y-65 / CBS 138) (Yeast).